We begin with the raw amino-acid sequence, 221 residues long: HP1-HOAP-interacting protein (221 aa).

A disordered region spans residues 69–113 (NAKRHKMARETAASITDVSGSQSSSHQSAPSLHVSGQSSEFGASY). Over residues 86-103 (VSGSQSSSHQSAPSLHVS) the composition is skewed to low complexity.

In terms of assembly, component of the HipHop-HOAP telomere-capping complex, composed of at least HipHop and cav/HOAP, and may include Su(var)205/HP1; HipHop and cav/HOAP, but not Su(var)205, are interdependent for their protein stability. Interacts (via N-terminus) with cav/HOAP and Su(var)205/HP1. The HipHop-HOAP complex recruits the MTV complex, consisting of moi/modigliani, tea and ver/verrocchio, to telomeres to form the terminin telomere-capping complex.

The protein localises to the nucleus. The protein resides in the chromosome. It is found in the telomere. Functionally, part of the HipHop-HOAP complex that recruits the MTV complex to form the terminin telomere-capping complex, which binds to chromosome ends in a sequence-independent manner and prevents telomere fusion. This is HP1-HOAP-interacting protein from Drosophila melanogaster (Fruit fly).